The sequence spans 468 residues: Siroheme synthase 1 (468 aa).

Positions 1 to 204 (MDYLPIFCRL…GDKASANQLA (204 aa)) are precorrin-2 dehydrogenase /sirohydrochlorin ferrochelatase. Residues 22–23 (EV) and 43–44 (PA) each bind NAD(+). Ser-128 bears the Phosphoserine mark. The tract at residues 216 to 468 (GEVILVGAGP…NHGVQAAALA (253 aa)) is uroporphyrinogen-III C-methyltransferase. Position 225 (Pro-225) interacts with S-adenosyl-L-methionine. Catalysis depends on Asp-248, which acts as the Proton acceptor. The active-site Proton donor is Lys-270. S-adenosyl-L-methionine-binding positions include 301–303 (GGD), Ile-306, 331–332 (TA), Met-383, and Gly-412.

The protein in the N-terminal section; belongs to the precorrin-2 dehydrogenase / sirohydrochlorin ferrochelatase family. This sequence in the C-terminal section; belongs to the precorrin methyltransferase family.

It catalyses the reaction uroporphyrinogen III + 2 S-adenosyl-L-methionine = precorrin-2 + 2 S-adenosyl-L-homocysteine + H(+). It carries out the reaction precorrin-2 + NAD(+) = sirohydrochlorin + NADH + 2 H(+). The enzyme catalyses siroheme + 2 H(+) = sirohydrochlorin + Fe(2+). Its pathway is cofactor biosynthesis; adenosylcobalamin biosynthesis; precorrin-2 from uroporphyrinogen III: step 1/1. The protein operates within cofactor biosynthesis; adenosylcobalamin biosynthesis; sirohydrochlorin from precorrin-2: step 1/1. It participates in porphyrin-containing compound metabolism; siroheme biosynthesis; precorrin-2 from uroporphyrinogen III: step 1/1. It functions in the pathway porphyrin-containing compound metabolism; siroheme biosynthesis; siroheme from sirohydrochlorin: step 1/1. Its pathway is porphyrin-containing compound metabolism; siroheme biosynthesis; sirohydrochlorin from precorrin-2: step 1/1. Multifunctional enzyme that catalyzes the SAM-dependent methylations of uroporphyrinogen III at position C-2 and C-7 to form precorrin-2 via precorrin-1. Then it catalyzes the NAD-dependent ring dehydrogenation of precorrin-2 to yield sirohydrochlorin. Finally, it catalyzes the ferrochelation of sirohydrochlorin to yield siroheme. The polypeptide is Siroheme synthase 1 (Aeromonas salmonicida (strain A449)).